The chain runs to 384 residues: Chaperone protein DnaJ (384 aa).

One can recognise a J domain in the interval 5–70; the sequence is DFYQVLGVSK…QKRQMYDQYG (66 aa). Residues 138–216 form a CR-type zinc finger; sequence GKTVELEIPT…CHGHGRKEET (79 aa). Zn(2+) contacts are provided by Cys151, Cys154, Cys168, Cys171, Cys190, Cys193, Cys204, and Cys207. CXXCXGXG motif repeat units follow at residues 151-158, 168-175, 190-197, and 204-211; these read CRDCNGSG, CGHCHGSG, CPQCRGTG, and CRTCHGHG.

Belongs to the DnaJ family. As to quaternary structure, homodimer. It depends on Zn(2+) as a cofactor.

The protein resides in the cytoplasm. Participates actively in the response to hyperosmotic and heat shock by preventing the aggregation of stress-denatured proteins and by disaggregating proteins, also in an autonomous, DnaK-independent fashion. Unfolded proteins bind initially to DnaJ; upon interaction with the DnaJ-bound protein, DnaK hydrolyzes its bound ATP, resulting in the formation of a stable complex. GrpE releases ADP from DnaK; ATP binding to DnaK triggers the release of the substrate protein, thus completing the reaction cycle. Several rounds of ATP-dependent interactions between DnaJ, DnaK and GrpE are required for fully efficient folding. Also involved, together with DnaK and GrpE, in the DNA replication of plasmids through activation of initiation proteins. The sequence is that of Chaperone protein DnaJ from Idiomarina loihiensis (strain ATCC BAA-735 / DSM 15497 / L2-TR).